Reading from the N-terminus, the 333-residue chain is Holliday junction branch migration complex subunit RuvB (333 aa).

The tract at residues 1–182 is large ATPase domain (RuvB-L); sequence MEERIVSAEA…FGVMARLEYY (182 aa). Residues Leu21, Arg22, Gly63, Lys66, Thr67, Thr68, 129–131, Arg172, Tyr182, and Arg219 contribute to the ATP site; that span reads EDF. Thr67 contributes to the Mg(2+) binding site. A small ATPAse domain (RuvB-S) region spans residues 183-253; sequence KPEELAQIVE…RACSALEQLH (71 aa). The head domain (RuvB-H) stretch occupies residues 256–333; the sequence is PLGLDHIDDK…AHYGVEKQNG (78 aa). 2 residues coordinate DNA: Arg311 and Arg316.

It belongs to the RuvB family. Homohexamer. Forms an RuvA(8)-RuvB(12)-Holliday junction (HJ) complex. HJ DNA is sandwiched between 2 RuvA tetramers; dsDNA enters through RuvA and exits via RuvB. An RuvB hexamer assembles on each DNA strand where it exits the tetramer. Each RuvB hexamer is contacted by two RuvA subunits (via domain III) on 2 adjacent RuvB subunits; this complex drives branch migration. In the full resolvosome a probable DNA-RuvA(4)-RuvB(12)-RuvC(2) complex forms which resolves the HJ.

It is found in the cytoplasm. It catalyses the reaction ATP + H2O = ADP + phosphate + H(+). The RuvA-RuvB-RuvC complex processes Holliday junction (HJ) DNA during genetic recombination and DNA repair, while the RuvA-RuvB complex plays an important role in the rescue of blocked DNA replication forks via replication fork reversal (RFR). RuvA specifically binds to HJ cruciform DNA, conferring on it an open structure. The RuvB hexamer acts as an ATP-dependent pump, pulling dsDNA into and through the RuvAB complex. RuvB forms 2 homohexamers on either side of HJ DNA bound by 1 or 2 RuvA tetramers; 4 subunits per hexamer contact DNA at a time. Coordinated motions by a converter formed by DNA-disengaged RuvB subunits stimulates ATP hydrolysis and nucleotide exchange. Immobilization of the converter enables RuvB to convert the ATP-contained energy into a lever motion, pulling 2 nucleotides of DNA out of the RuvA tetramer per ATP hydrolyzed, thus driving DNA branch migration. The RuvB motors rotate together with the DNA substrate, which together with the progressing nucleotide cycle form the mechanistic basis for DNA recombination by continuous HJ branch migration. Branch migration allows RuvC to scan DNA until it finds its consensus sequence, where it cleaves and resolves cruciform DNA. In Shouchella clausii (strain KSM-K16) (Alkalihalobacillus clausii), this protein is Holliday junction branch migration complex subunit RuvB.